The primary structure comprises 426 residues: Enolase (426 aa).

A disordered region spans residues proline 38–glycine 60. A compositionally biased stretch (basic and acidic residues) spans glutamate 47–arginine 58. Glutamine 163 is a (2R)-2-phosphoglycerate binding site. Glutamate 205 acts as the Proton donor in catalysis. Residues aspartate 242, glutamate 285, and aspartate 312 each contribute to the Mg(2+) site. The (2R)-2-phosphoglycerate site is built by lysine 337, arginine 366, serine 367, and lysine 388. The active-site Proton acceptor is lysine 337.

Belongs to the enolase family. Mg(2+) serves as cofactor.

It localises to the cytoplasm. Its subcellular location is the secreted. It is found in the cell surface. It catalyses the reaction (2R)-2-phosphoglycerate = phosphoenolpyruvate + H2O. It participates in carbohydrate degradation; glycolysis; pyruvate from D-glyceraldehyde 3-phosphate: step 4/5. Catalyzes the reversible conversion of 2-phosphoglycerate (2-PG) into phosphoenolpyruvate (PEP). It is essential for the degradation of carbohydrates via glycolysis. This Caulobacter sp. (strain K31) protein is Enolase.